The chain runs to 82 residues: Large ribosomal subunit protein uL23 (82 aa).

It belongs to the universal ribosomal protein uL23 family. As to quaternary structure, part of the 50S ribosomal subunit. Contacts protein L29.

Its function is as follows. Binds to 23S rRNA. One of the proteins that surrounds the polypeptide exit tunnel on the outside of the ribosome. This Methanosarcina barkeri (strain Fusaro / DSM 804) protein is Large ribosomal subunit protein uL23.